The primary structure comprises 61 residues: Small ribosomal subunit protein uS14 (61 aa).

Zn(2+) is bound by residues Cys24, Cys27, Cys40, and Cys43.

It belongs to the universal ribosomal protein uS14 family. Zinc-binding uS14 subfamily. In terms of assembly, part of the 30S ribosomal subunit. Contacts proteins S3 and S10. Zn(2+) is required as a cofactor.

Functionally, binds 16S rRNA, required for the assembly of 30S particles and may also be responsible for determining the conformation of the 16S rRNA at the A site. This Treponema denticola (strain ATCC 35405 / DSM 14222 / CIP 103919 / JCM 8153 / KCTC 15104) protein is Small ribosomal subunit protein uS14.